The primary structure comprises 78 residues: Small ribosomal subunit protein uS19m (78 aa).

Belongs to the universal ribosomal protein uS19 family.

It is found in the mitochondrion. This is Small ribosomal subunit protein uS19m (RPS19) from Acanthamoeba castellanii (Amoeba).